The primary structure comprises 28 residues: Ribosome-inactivating protein pleuturegin (28 aa).

It belongs to the ribosome-inactivating protein family.

It carries out the reaction Endohydrolysis of the N-glycosidic bond at one specific adenosine on the 28S rRNA.. Inhibits protein synthesis in animal cells. Does not possess ribonuclease activity. This is Ribosome-inactivating protein pleuturegin from Pleurotus tuber-regium (King tuber oyster mushroom).